Here is a 435-residue protein sequence, read N- to C-terminus: Putative BTB/POZ domain-containing protein L275 (435 aa).

Residues 80–149 (YDGYVYINVG…IKGKQNDNHN (70 aa)) enclose the BTB domain.

The protein belongs to the mimivirus BTB/WD family.

This is Putative BTB/POZ domain-containing protein L275 from Acanthamoeba polyphaga mimivirus (APMV).